The chain runs to 185 residues: Potassium-transporting ATPase KdpC subunit (185 aa).

The chain crosses the membrane as a helical span at residues 14 to 34 (ALSLLTGVAYPLALTGIAAVI).

This sequence belongs to the KdpC family. The system is composed of three essential subunits: KdpA, KdpB and KdpC.

The protein localises to the cell inner membrane. In terms of biological role, part of the high-affinity ATP-driven potassium transport (or Kdp) system, which catalyzes the hydrolysis of ATP coupled with the electrogenic transport of potassium into the cytoplasm. This subunit acts as a catalytic chaperone that increases the ATP-binding affinity of the ATP-hydrolyzing subunit KdpB by the formation of a transient KdpB/KdpC/ATP ternary complex. The polypeptide is Potassium-transporting ATPase KdpC subunit (Cereibacter sphaeroides (strain KD131 / KCTC 12085) (Rhodobacter sphaeroides)).